We begin with the raw amino-acid sequence, 201 residues long: Small ribosomal subunit protein uS4 (201 aa).

The S4 RNA-binding domain maps to 91–154 (SRLDNVIYRA…QKMEWFEEAQ (64 aa)).

This sequence belongs to the universal ribosomal protein uS4 family. Part of the 30S ribosomal subunit. Contacts protein S5. The interaction surface between S4 and S5 is involved in control of translational fidelity.

One of the primary rRNA binding proteins, it binds directly to 16S rRNA where it nucleates assembly of the body of the 30S subunit. Functionally, with S5 and S12 plays an important role in translational accuracy. In Corynebacterium aurimucosum (strain ATCC 700975 / DSM 44827 / CIP 107346 / CN-1) (Corynebacterium nigricans), this protein is Small ribosomal subunit protein uS4.